The primary structure comprises 548 residues: Chaperonin GroEL (548 aa).

ATP contacts are provided by residues 30–33 (TLGP), lysine 51, 87–91 (DGTTT), glycine 415, and aspartate 495.

This sequence belongs to the chaperonin (HSP60) family. In terms of assembly, forms a cylinder of 14 subunits composed of two heptameric rings stacked back-to-back. Interacts with the co-chaperonin GroES.

The protein resides in the cytoplasm. The catalysed reaction is ATP + H2O + a folded polypeptide = ADP + phosphate + an unfolded polypeptide.. Functionally, together with its co-chaperonin GroES, plays an essential role in assisting protein folding. The GroEL-GroES system forms a nano-cage that allows encapsulation of the non-native substrate proteins and provides a physical environment optimized to promote and accelerate protein folding. This chain is Chaperonin GroEL, found in Colwellia psychrerythraea (strain 34H / ATCC BAA-681) (Vibrio psychroerythus).